We begin with the raw amino-acid sequence, 502 residues long: Probable cytosol aminopeptidase (502 aa).

Residues Lys269 and Asp274 each contribute to the Mn(2+) site. Lys281 is an active-site residue. 3 residues coordinate Mn(2+): Asp292, Asp351, and Glu353. Arg355 is an active-site residue.

Belongs to the peptidase M17 family. Mn(2+) serves as cofactor.

It localises to the cytoplasm. It carries out the reaction Release of an N-terminal amino acid, Xaa-|-Yaa-, in which Xaa is preferably Leu, but may be other amino acids including Pro although not Arg or Lys, and Yaa may be Pro. Amino acid amides and methyl esters are also readily hydrolyzed, but rates on arylamides are exceedingly low.. The enzyme catalyses Release of an N-terminal amino acid, preferentially leucine, but not glutamic or aspartic acids.. Presumably involved in the processing and regular turnover of intracellular proteins. Catalyzes the removal of unsubstituted N-terminal amino acids from various peptides. This is Probable cytosol aminopeptidase from Shewanella sediminis (strain HAW-EB3).